Here is a 412-residue protein sequence, read N- to C-terminus: Interferon-inducible GTPase 5 (412 aa).

One can recognise an IRG-type G domain in the interval 51–234 (TRLEVGVTGE…PMLVTTWEHD (184 aa)). GTP is bound by residues 60–67 (ESGAGKSS), 85–89 (TGVVE), and 215–217 (SNL). Residues S246 and S303 each carry the phosphoserine modification.

The protein belongs to the TRAFAC class dynamin-like GTPase superfamily. IRG family. In terms of assembly, interacts with PLIN2/ADRP and COX4I1/COXIV. In terms of tissue distribution, expressed in spermatozoa tails from the testis and epididymis, where it may be a component of the fibrous sheath (at protein level).

It localises to the cell projection. The protein resides in the cilium. The protein localises to the flagellum. Its subcellular location is the lipid droplet. The catalysed reaction is GTP + H2O = GDP + phosphate + H(+). Its function is as follows. Required for sperm motility and therefore male fertility, via positive regulation of spermatozoa fibrous sheath formation. The sequence is that of Interferon-inducible GTPase 5 from Mus musculus (Mouse).